Consider the following 393-residue polypeptide: Acetate kinase (393 aa).

Residue asparagine 6 participates in Mg(2+) binding. Lysine 13 contacts ATP. Substrate is bound at residue arginine 87. Aspartate 143 acts as the Proton donor/acceptor in catalysis. Residues 203-207 (HLGNG), 278-280 (DMR), and 326-330 (GIGEN) contribute to the ATP site. Glutamate 380 contacts Mg(2+).

It belongs to the acetokinase family. Homodimer. The cofactor is Mg(2+). Requires Mn(2+) as cofactor.

It localises to the cytoplasm. It carries out the reaction acetate + ATP = acetyl phosphate + ADP. The protein operates within metabolic intermediate biosynthesis; acetyl-CoA biosynthesis; acetyl-CoA from acetate: step 1/2. Catalyzes the formation of acetyl phosphate from acetate and ATP. Can also catalyze the reverse reaction. This Mycoplasma mycoides subsp. mycoides SC (strain CCUG 32753 / NCTC 10114 / PG1) protein is Acetate kinase.